Here is a 167-residue protein sequence, read N- to C-terminus: UPF0102 protein RB9115 (167 aa).

Belongs to the UPF0102 family.

The chain is UPF0102 protein RB9115 from Rhodopirellula baltica (strain DSM 10527 / NCIMB 13988 / SH1).